The primary structure comprises 491 residues: Immediate early protein IE1 (491 aa).

A compositionally biased stretch (basic and acidic residues) spans 1–11 (MESSAKRKMDP). The interval 1–24 (MESSAKRKMDPDNPDEGPSSKVPR) is nuclear localization signal. The interval 1 to 30 (MESSAKRKMDPDNPDEGPSSKVPRPETPVT) is disordered. The segment at 132 to 346 (ILDKVHEPFE…SVMKRRIEEI (215 aa)) is interaction with host PML, interference with PML sumoylation and disruption of PML-associated nuclear bodies. The interval 373–445 (AIAEESDEEE…EEGAQEERED (73 aa)) is interaction with host STAT2. Residues 410 to 420 (ATIPLSSVIVA) form a modulation of STAT3/STAT1 signaling region. The segment at 410-445 (ATIPLSSVIVAENSDQEESEQSDEEEEEGAQEERED) is interaction with host STAT3. Residues 421 to 472 (ENSDQEESEQSDEEEEEGAQEEREDTVSVKSEPVSEIEEVAPEEEEDGAEEP) are acidic. The segment at 421-491 (ENSDQEESEQ…PMVTRSKADQ (71 aa)) is disordered. Acidic residues predominate over residues 423–444 (SDQEESEQSDEEEEEGAQEERE). Residues 449 to 452 (VKSE) are interaction with host SUMO1. A Glycyl lysine isopeptide (Lys-Gly) (interchain with G-Cter in SUMO) cross-link involves residue Lys-450. The span at 455–470 (SEIEEVAPEEEEDGAE) shows a compositional bias: acidic residues. The segment at 475-491 (SGGKSTHPMVTRSKADQ) is chromosome-tethering domain (CTD), binding to histones.

This sequence belongs to the HHV-5 IE1 protein family. In terms of assembly, forms homodimers. Interacts with human p53/TP53; this interaction inhibits p53/TP53-dependent transactivation activity. Interacts with host STAT1. Interacts with host STAT2; this interaction promotes viral growth and counteracts the antiviral interferon response. May also interact with the host STAT1-STAT2 heterodimer. Interacts with host STAT3; this interaction leads to STAT3 nuclear accumulation and disruption of IL6-induced STAT3 phosphorylation. Interacts with host PML; this interaction inhibits host PML de novo sumoylation and probably inhibits PML regulation of type I and type II interferon-induced gene expression. Interacts with host DAXX. Interacts with host SP100. Interacts with host E2F1. Interacts with host RB1. Interacts with host HDAC1; this interaction inhibits histone deacetylation and promotes viral transcription. Interacts with host HDAC2; this interaction inhibits histone deacetylation and promotes viral transcription. Interacts with host HDAC3; this interaction inhibits histone deacetylation and promotes viral transcription. Interacts with host PLSCR1; this interaction inhibits IE1 transactivating activity. Sumoylated by host PML/nuclear domain 10. Sumoylation abolishes the interaction with host STAT2 and thus the IE1-mediated repression of interferon-stimulated genes.

It is found in the host nucleus. Plays an important role in transactivating viral early genes as well as activating its own promoter, probably by altering the viral chromatin structure. Expression of IE1 and IE2 proteins is critical for the establishment of lytic infection and reactivation from viral latency. Disrupts PML-associated ND10 nuclear bodies by interfering with host PML and SP100 sumoylation thereby altering the regulation of type I and type II interferon-induced gene expression. Promotes efficient viral growth by interacting with and directing host SP100 to degradation, leading to enhanced acetylation level of histones. In addition, functions in counteracting the host innate antiviral response. Inhibits the type I interferon pathway by directly interacting with and sequestrating host STAT2. Also targets type II interferon pathway by repressing IL6- and STAT3 target genes. Repression of STAT3 genes is due to STAT3 nuclear accumulation and disruption of IL6-induced STAT3 phosphorylation by IE1. This repression is followed by phosphorylation and activation of STAT1. Inhibits host ISG transcription by sequestering host ISGF3 in a PML- and STAT2- binding dependent manner. Alters host cell cycle progression, probably through its interaction with host E2F1 or RB1 that overcomes the RB1-mediated repression of E2F-responsive promoters. May act as a E3 ubiquitin ligase targeting several host proteins including HES1 and SP100A for ubiquitination and subsequent proteasomal degradation. Impairs the radial migration of immature neurons by downregulating Gap junction alpha-1 protein/GJA1 also via ubiquitination and degradation. The chain is Immediate early protein IE1 (UL123) from Human cytomegalovirus (strain Towne) (HHV-5).